The following is a 217-amino-acid chain: MRLRNKPWAKDKIAAYPQYVIPDPETKRGRWRELFGHDQPLHVEIGTGKGKFITEMAKLHPDVNFIGIELYPSVLVSALDKLIESGLANVKLLNANAKDLTAFFADGEVSRIYLNFSDPWPKKRHEKRRLTYRDFLALYDRILAEDGDIHLKTDNQSFFEYSLVSLSQYGFVLASVQLDLHQSGMTDNVMTEYEEKFSAKGNRIYRCEAVRPPRRSS.

Positions 44, 69, 96, and 118 each coordinate S-adenosyl-L-methionine. Residue D118 is part of the active site. K122 serves as a coordination point for substrate. Positions R124–R129 are interaction with RNA. Substrate is bound by residues D154 and T191–E194.

The protein belongs to the class I-like SAM-binding methyltransferase superfamily. TrmB family.

It carries out the reaction guanosine(46) in tRNA + S-adenosyl-L-methionine = N(7)-methylguanosine(46) in tRNA + S-adenosyl-L-homocysteine. Its pathway is tRNA modification; N(7)-methylguanine-tRNA biosynthesis. Its function is as follows. Catalyzes the formation of N(7)-methylguanine at position 46 (m7G46) in tRNA. The sequence is that of tRNA (guanine-N(7)-)-methyltransferase from Geobacillus kaustophilus (strain HTA426).